The sequence spans 812 residues: Valine--tRNA ligase (812 aa).

Positions 46 to 56 (PTVSGQLHIGH) match the 'HIGH' region motif. The short motif at 536 to 540 (KMSKS) is the 'KMSKS' region element. Lysine 539 lines the ATP pocket.

The protein belongs to the class-I aminoacyl-tRNA synthetase family. ValS type 2 subfamily. In terms of assembly, monomer.

It is found in the cytoplasm. The catalysed reaction is tRNA(Val) + L-valine + ATP = L-valyl-tRNA(Val) + AMP + diphosphate. Its function is as follows. Catalyzes the attachment of valine to tRNA(Val). As ValRS can inadvertently accommodate and process structurally similar amino acids such as threonine, to avoid such errors, it has a 'posttransfer' editing activity that hydrolyzes mischarged Thr-tRNA(Val) in a tRNA-dependent manner. In Rickettsia conorii (strain ATCC VR-613 / Malish 7), this protein is Valine--tRNA ligase.